A 572-amino-acid polypeptide reads, in one-letter code: MAFNFNWSPLMADASFYTRAQDLLTAALNKSPKPPIIVDDIIVTELNLGSIPPELEILEIGDLAEDRFRGIFKMSYSGDAFLTLKTRVQANPLNTYLLTRPSFATPRPLAAATPLTIPLQITLSDFKLSGFVILVFSKQKGITVVFRNDPLESLKVSSTFDSIPFVRDFLQKEIEAQLRILFMDELPAIIHRLSLRLWVPEYRAGEELQTQTASANGEGPGQDPLASPPQDPVDALGNALNESEIESLSLDSSVETHSLFSQKNLLRLAALTDSQRTLSLFTPSIREVVYRAWTSPSDQTDASGSVTSPFFPVLSRTQSQVGSMSSFPDSASMVSSQSRSSTPSHTFSGYGLSLGAGRHSKAHARKRKKRVVDLRRPKTTDDAPSVSDESSFTESTSAPSICSAPLPVLDEQTDDPVTPPLSPDNDLHLPAIPERHRMSISRPALRRENASEMIRDTAECKPSSNAVGQAIQEEDLSATPRAAVRAHGASVLEKGKQDPDSSAGSSRQLPSTILPFINDNPTGGVVDQALVERLAGEIARRMRDEKFMASNACGPFWDRHSQEESPPPAYGH.

The region spanning 1 to 195 is the SMP-LTD domain; it reads MAFNFNWSPL…LPAIIHRLSL (195 aa). Disordered regions lie at residues 212-236, 321-426, 477-522, and 553-572; these read TASA…VDAL, VGSM…PDND, SATP…DNPT, and CGPF…AYGH. The segment covering 330-348 has biased composition (low complexity); it reads SASMVSSQSRSSTPSHTFS. A compositionally biased stretch (basic residues) spans 358–370; it reads RHSKAHARKRKKR. Over residues 371–381 the composition is skewed to basic and acidic residues; sequence VVDLRRPKTTD. 2 stretches are compositionally biased toward polar residues: residues 387 to 400 and 500 to 511; these read SDES…SAPS and DSSAGSSRQLPS.

Belongs to the MDM34 family. In terms of assembly, component of the ER-mitochondria encounter structure (ERMES) or MDM complex, composed of mmm1, mdm10, mdm12 and mdm34.

The protein resides in the mitochondrion outer membrane. Component of the ERMES/MDM complex, which serves as a molecular tether to connect the endoplasmic reticulum (ER) and mitochondria. Components of this complex are involved in the control of mitochondrial shape and protein biogenesis, and function in nonvesicular lipid trafficking between the ER and mitochondria. Mdm34 is required for the interaction of the ER-resident membrane protein mmm1 and the outer mitochondrial membrane-resident beta-barrel protein mdm10. This is Mitochondrial distribution and morphology protein 34 from Aspergillus fumigatus (strain CBS 144.89 / FGSC A1163 / CEA10) (Neosartorya fumigata).